A 644-amino-acid chain; its full sequence is Acetyl-coenzyme A synthetase 2 (644 aa).

CoA contacts are provided by residues R189–K192, T307, and N331. Residues G383–P385, D407–T412, D496, and R511 each bind ATP. Residue S519 coordinates CoA. An ATP-binding site is contributed by R522. Residues V533, H535, and V538 each coordinate Mg(2+). The residue at position 605 (K605) is an N6-acetyllysine.

This sequence belongs to the ATP-dependent AMP-binding enzyme family. It depends on Mg(2+) as a cofactor. Acetylated. Deacetylation by the SIR2-homolog deacetylase activates the enzyme.

It catalyses the reaction acetate + ATP + CoA = acetyl-CoA + AMP + diphosphate. Its function is as follows. Catalyzes the conversion of acetate into acetyl-CoA (AcCoA), an essential intermediate at the junction of anabolic and catabolic pathways. AcsA undergoes a two-step reaction. In the first half reaction, AcsA combines acetate with ATP to form acetyl-adenylate (AcAMP) intermediate. In the second half reaction, it can then transfer the acetyl group from AcAMP to the sulfhydryl group of CoA, forming the product AcCoA. This chain is Acetyl-coenzyme A synthetase 2, found in Pseudomonas putida (strain ATCC 47054 / DSM 6125 / CFBP 8728 / NCIMB 11950 / KT2440).